Consider the following 706-residue polypeptide: Amino-acid acetyltransferase, mitochondrial (706 aa).

Disordered regions lie at residues 1 to 25 (MSSR…GAGD) and 367 to 403 (NPAN…PAKQ). The transit peptide at 1–35 (MSSRVLASRAAQPLKRHPTVVGAGDEAYPTPRRCF) directs the protein to the mitochondrion. The span at 367–388 (NPANNSQGESVVTNPISDSNAV) shows a compositional bias: polar residues. Residues 389–401 (SESASTEPTSTPA) are compositionally biased toward low complexity. Positions 527–696 (TRPNMNLDDP…YEAVCRSIQP (170 aa)) constitute an N-acetyltransferase domain.

Belongs to the acetyltransferase family.

It is found in the mitochondrion. It carries out the reaction L-glutamate + acetyl-CoA = N-acetyl-L-glutamate + CoA + H(+). It functions in the pathway amino-acid biosynthesis; L-arginine biosynthesis; N(2)-acetyl-L-ornithine from L-glutamate: step 1/4. N-acetylglutamate synthase involved in arginine biosynthesis. The polypeptide is Amino-acid acetyltransferase, mitochondrial (arg2) (Emericella nidulans (strain FGSC A4 / ATCC 38163 / CBS 112.46 / NRRL 194 / M139) (Aspergillus nidulans)).